Here is a 130-residue protein sequence, read N- to C-terminus: Small ribosomal subunit protein uS9 (130 aa).

Belongs to the universal ribosomal protein uS9 family.

The polypeptide is Small ribosomal subunit protein uS9 (Alkalilimnicola ehrlichii (strain ATCC BAA-1101 / DSM 17681 / MLHE-1)).